We begin with the raw amino-acid sequence, 267 residues long: Phosphonoacetaldehyde hydrolase (267 aa).

Asp10 serves as the catalytic Nucleophile. Positions 10 and 12 each coordinate Mg(2+). Lys51 (schiff-base intermediate with substrate) is an active-site residue. Asp184 contacts Mg(2+).

The protein belongs to the HAD-like hydrolase superfamily. PhnX family. In terms of assembly, homodimer. Mg(2+) serves as cofactor.

The catalysed reaction is phosphonoacetaldehyde + H2O = acetaldehyde + phosphate + H(+). In terms of biological role, involved in phosphonate degradation. The sequence is that of Phosphonoacetaldehyde hydrolase from Paraburkholderia phytofirmans (strain DSM 17436 / LMG 22146 / PsJN) (Burkholderia phytofirmans).